A 388-amino-acid chain; its full sequence is MAVTPISLRPGVLAEAVVDLGAIDYNVRVLREHAGMAQLMVVLKADAYGHGATQVALAALAAGAAELGVATVDEALALRADGISAPVLAWLHPPGIDFGPALLADVQIAVSSVRQLDELLDAVRRTGRTATVTVKADTGLNRNGVVTDQYPAMLTALQRAVVEDAVRLRGLMSHLVYADQPDNPSNDVQGKRFAALLAQAHEQGLRFEVAHLSNSSATMSRPDLAYDLVRPGIAVYGLSPVPSRGDMGLIPAMTVKCAVAMVKSIRAGEGVSYGHDWIAQHDTNLALLPVGYADGVFRSLGGRLDVLINGKRRPGVGRICMDQFVVDLGPGPIDVAEGDEAILFGPGARGEPTAQDWADLLGTIHYEVVTSLRGRITRTYREAQTVDR.

K44 (proton acceptor; specific for D-alanine) is an active-site residue. Residue K44 is modified to N6-(pyridoxal phosphate)lysine. Residue R142 coordinates substrate. Y273 functions as the Proton acceptor; specific for L-alanine in the catalytic mechanism. Residue M321 participates in substrate binding.

This sequence belongs to the alanine racemase family. Pyridoxal 5'-phosphate serves as cofactor.

The catalysed reaction is L-alanine = D-alanine. Its pathway is amino-acid biosynthesis; D-alanine biosynthesis; D-alanine from L-alanine: step 1/1. Functionally, catalyzes the interconversion of L-alanine and D-alanine. May also act on other amino acids. This is Alanine racemase (alr) from Mycobacterium leprae (strain TN).